Here is a 72-residue protein sequence, read N- to C-terminus: Translation initiation factor IF-1 (72 aa).

The region spanning 1–72 (MAKDDVIQMQ…SRARIVFRAK (72 aa)) is the S1-like domain.

Belongs to the IF-1 family. As to quaternary structure, component of the 30S ribosomal translation pre-initiation complex which assembles on the 30S ribosome in the order IF-2 and IF-3, IF-1 and N-formylmethionyl-tRNA(fMet); mRNA recruitment can occur at any time during PIC assembly.

Its subcellular location is the cytoplasm. Functionally, one of the essential components for the initiation of protein synthesis. Stabilizes the binding of IF-2 and IF-3 on the 30S subunit to which N-formylmethionyl-tRNA(fMet) subsequently binds. Helps modulate mRNA selection, yielding the 30S pre-initiation complex (PIC). Upon addition of the 50S ribosomal subunit IF-1, IF-2 and IF-3 are released leaving the mature 70S translation initiation complex. This Burkholderia thailandensis (strain ATCC 700388 / DSM 13276 / CCUG 48851 / CIP 106301 / E264) protein is Translation initiation factor IF-1.